We begin with the raw amino-acid sequence, 377 residues long: Actin-related protein T2 (377 aa).

Belongs to the actin family.

Its subcellular location is the cytoplasm. It is found in the cytoskeleton. This chain is Actin-related protein T2 (ACTRT2), found in Bos taurus (Bovine).